Reading from the N-terminus, the 370-residue chain is F-box/kelch-repeat protein At4g38940 (370 aa).

Residues 18–64 form the F-box domain; sequence PCLISLLPEEIVVDIVARVPRCYYPTLSQVSRRFRSLVASPEIYKRR. Kelch repeat units lie at residues 131–177, 178–230, and 263–315; these read NIFV…LIDR, KIYV…VIGG, and SACV…SYTG.

In terms of assembly, part of a SCF (ASK-cullin-F-box) protein ligase complex. Interacts with SKP1A/ASK1, SKP1B/ASK2, ASK11, ASK13 and ASK18.

It is found in the nucleus. The protein operates within protein modification; protein ubiquitination. In terms of biological role, component of SCF(ASK-cullin-F-box) E3 ubiquitin ligase complexes, which may mediate the ubiquitination and subsequent proteasomal degradation of target proteins. In Arabidopsis thaliana (Mouse-ear cress), this protein is F-box/kelch-repeat protein At4g38940.